A 176-amino-acid polypeptide reads, in one-letter code: RNA pyrophosphohydrolase (176 aa).

The 144-residue stretch at 6–149 folds into the Nudix hydrolase domain; sequence GYRPNVGIVI…KRDVYRRVMK (144 aa). A Nudix box motif is present at residues 38–59; that stretch reads GGINPGESPEQAMYRELFEEVG.

Belongs to the Nudix hydrolase family. RppH subfamily. Requires a divalent metal cation as cofactor.

In terms of biological role, accelerates the degradation of transcripts by removing pyrophosphate from the 5'-end of triphosphorylated RNA, leading to a more labile monophosphorylated state that can stimulate subsequent ribonuclease cleavage. This is RNA pyrophosphohydrolase from Proteus mirabilis (strain HI4320).